The following is a 121-amino-acid chain: N-alpha-acetyltransferase 38, NatC auxiliary subunit (121 aa).

The Sm domain maps to 40-113 (PGRRKLQKWL…IVSLSIDEPD (74 aa)).

Belongs to the snRNP Sm proteins family. As to quaternary structure, component of the N-terminal acetyltransferase C (NatC) complex, which is composed of Naa35, Sbat/Naa38 and Naa30A. Interacts with Smn and Hez; along with Hez and Vlet, may form an accessory subcomplex involved in SMN complex function.

It localises to the cytoplasm. It is found in the nucleus. Functionally, auxiliary component of the N-terminal acetyltransferase C (NatC) complex which catalyzes acetylation of N-terminal methionine residues. May have an accessory function in the survival motor neuron (SMN) complex. In Drosophila melanogaster (Fruit fly), this protein is N-alpha-acetyltransferase 38, NatC auxiliary subunit.